Reading from the N-terminus, the 217-residue chain is Large ribosomal subunit protein uL1 (217 aa).

This sequence belongs to the universal ribosomal protein uL1 family.

The polypeptide is Large ribosomal subunit protein uL1 (RPL10A) (Eremothecium gossypii (strain ATCC 10895 / CBS 109.51 / FGSC 9923 / NRRL Y-1056) (Yeast)).